Consider the following 520-residue polypeptide: 4-hydroxyphenylacetate 3-monooxygenase oxygenase component (520 aa).

Residues 155-157 (HAI) and Thr196 each bind FAD.

Belongs to the FADH(2)-utilizing monooxygenase family. In terms of assembly, homodimer. HPA 3-hydroxylase consists of a reductase component HpaC and an oxygenase component HpaB. Some form of interactions between the reductase and the oxygenase facilitate the transfer of FADH(-) to the oxygenase in P.aeruginosa, although interactions are not required in other species.

The enzyme catalyses 4-hydroxyphenylacetate + FADH2 + O2 = 3,4-dihydroxyphenylacetate + FAD + H2O + H(+). It participates in aromatic compound metabolism; 4-hydroxyphenylacetate degradation; pyruvate and succinate semialdehyde from 4-hydroxyphenylacetate: step 1/7. In terms of biological role, oxygenase component of the 4-hydroxyphenylacetate (HPA) 3-hydroxylase. Catalyzes the hydroxylation of 4-hydroxyphenylacetate to form 3,4-dihydroxyphenylacetate, using FADH(-) provided by the reductase component HpaC to activate oxygen. To a lesser extent, can also use reduced FMN. In vitro, has hydroxylation activity toward tyrosol and various cinnamic acid derivatives, catalyzing the hydroxylation of p-coumaric acid, caffeic acid, ferulic acid, and coniferaldehyde. The protein is 4-hydroxyphenylacetate 3-monooxygenase oxygenase component of Pseudomonas aeruginosa (strain ATCC 15692 / DSM 22644 / CIP 104116 / JCM 14847 / LMG 12228 / 1C / PRS 101 / PAO1).